A 710-amino-acid chain; its full sequence is Polyribonucleotide nucleotidyltransferase (710 aa).

Residues Asp487 and Asp493 each coordinate Mg(2+). A KH domain is found at Pro554–Ile613. Residues Gly623–Lys691 form the S1 motif domain. Positions Lys691–Glu710 are disordered.

The protein belongs to the polyribonucleotide nucleotidyltransferase family. Component of the RNA degradosome, which is a multiprotein complex involved in RNA processing and mRNA degradation. Requires Mg(2+) as cofactor.

It localises to the cytoplasm. The catalysed reaction is RNA(n+1) + phosphate = RNA(n) + a ribonucleoside 5'-diphosphate. Functionally, involved in mRNA degradation. Catalyzes the phosphorolysis of single-stranded polyribonucleotides processively in the 3'- to 5'-direction. The chain is Polyribonucleotide nucleotidyltransferase from Vibrio campbellii (strain ATCC BAA-1116).